A 102-amino-acid polypeptide reads, in one-letter code: Small ribosomal subunit protein uS10 (102 aa).

Belongs to the universal ribosomal protein uS10 family. As to quaternary structure, part of the 30S ribosomal subunit.

Functionally, involved in the binding of tRNA to the ribosomes. This chain is Small ribosomal subunit protein uS10, found in Bifidobacterium animalis subsp. lactis (strain AD011).